The chain runs to 176 residues: Nucleoside triphosphate/diphosphate phosphatase (176 aa).

Residue arginine 23 is the Proton donor of the active site. Asparagine 87, aspartate 103, aspartate 105, aspartate 107, aspartate 120, and glutamate 123 together coordinate Mg(2+).

Belongs to the Ntdp family. Requires Mg(2+) as cofactor.

It catalyses the reaction a ribonucleoside 5'-triphosphate + H2O = a ribonucleoside 5'-diphosphate + phosphate + H(+). The enzyme catalyses a ribonucleoside 5'-diphosphate + H2O = a ribonucleoside 5'-phosphate + phosphate + H(+). Functionally, has nucleoside phosphatase activity towards nucleoside triphosphates and nucleoside diphosphates. This chain is Nucleoside triphosphate/diphosphate phosphatase, found in Bacillus cytotoxicus (strain DSM 22905 / CIP 110041 / 391-98 / NVH 391-98).